Here is a 134-residue protein sequence, read N- to C-terminus: ATP synthase epsilon chain (134 aa).

The protein belongs to the ATPase epsilon chain family. In terms of assembly, F-type ATPases have 2 components, CF(1) - the catalytic core - and CF(0) - the membrane proton channel. CF(1) has five subunits: alpha(3), beta(3), gamma(1), delta(1), epsilon(1). CF(0) has three main subunits: a, b and c.

The protein resides in the cell membrane. Functionally, produces ATP from ADP in the presence of a proton gradient across the membrane. The chain is ATP synthase epsilon chain from Ruminiclostridium cellulolyticum (strain ATCC 35319 / DSM 5812 / JCM 6584 / H10) (Clostridium cellulolyticum).